Reading from the N-terminus, the 189-residue chain is Ras-like protein 1 (189 aa).

10–17 (GGGGVGKS) provides a ligand contact to GTP. Positions 32–40 (YDPTIEDSY) match the Effector region motif. GTP-binding positions include 57–61 (DTAGQ) and 116–119 (NKCD). C186 bears the Cysteine methyl ester mark. Residue C186 is the site of S-geranylgeranyl cysteine attachment. A propeptide spans 187–189 (LLL) (removed in mature form).

Belongs to the small GTPase superfamily. Ras family.

It localises to the cell membrane. The catalysed reaction is GTP + H2O = GDP + phosphate + H(+). Ras proteins bind GDP/GTP and possess intrinsic GTPase activity. This is Ras-like protein 1 (RAS1) from Physarum polycephalum (Slime mold).